The following is a 205-amino-acid chain: MINQLSALLKTAGISLSDRQKQQLVGYVEMLHKWNKAYNLTSVRDPQQMLVRHILDSIVVEPHLIGERFIDVGTGPGLPGVPLAIVRPGAHFTLLDSLGKRVRFLKQVQHELKLDNITPVQSRVEEFAGEPPFDGVISRAFASLNDMVSWCHHLPGQQGRFYALKGVLPEEEIAALPAGFRVENISPLIVPQLEGERHLVVIARH.

Residues Gly-73, Leu-78, 124 to 125 (VE), and Arg-139 contribute to the S-adenosyl-L-methionine site.

Belongs to the methyltransferase superfamily. RNA methyltransferase RsmG family.

It is found in the cytoplasm. The enzyme catalyses guanosine(527) in 16S rRNA + S-adenosyl-L-methionine = N(7)-methylguanosine(527) in 16S rRNA + S-adenosyl-L-homocysteine. Its function is as follows. Specifically methylates the N7 position of guanine in position 527 of 16S rRNA. The protein is Ribosomal RNA small subunit methyltransferase G of Erwinia tasmaniensis (strain DSM 17950 / CFBP 7177 / CIP 109463 / NCPPB 4357 / Et1/99).